Consider the following 49-residue polypeptide: DNA-directed RNA polymerase subunit Rpo12 (49 aa).

Residues cysteine 11, cysteine 27, and cysteine 30 each contribute to the Zn(2+) site.

The protein belongs to the archaeal Rpo12/eukaryotic RPC10 RNA polymerase subunit family. Part of the RNA polymerase complex. Requires Zn(2+) as cofactor.

The protein resides in the cytoplasm. It catalyses the reaction RNA(n) + a ribonucleoside 5'-triphosphate = RNA(n+1) + diphosphate. Functionally, DNA-dependent RNA polymerase (RNAP) catalyzes the transcription of DNA into RNA using the four ribonucleoside triphosphates as substrates. This chain is DNA-directed RNA polymerase subunit Rpo12, found in Pyrococcus furiosus (strain ATCC 43587 / DSM 3638 / JCM 8422 / Vc1).